We begin with the raw amino-acid sequence, 85 residues long: Large ribosomal subunit protein bL27 (85 aa).

The protein belongs to the bacterial ribosomal protein bL27 family.

In Campylobacter fetus subsp. fetus (strain 82-40), this protein is Large ribosomal subunit protein bL27.